We begin with the raw amino-acid sequence, 346 residues long: Methylthioribose-1-phosphate isomerase (346 aa).

Substrate-binding positions include 54–56, Arg91, and Gln192; that span reads RGA. Asp233 acts as the Proton donor in catalysis. A substrate-binding site is contributed by 243–244; the sequence is NK.

The protein belongs to the eIF-2B alpha/beta/delta subunits family. MtnA subfamily.

It catalyses the reaction 5-(methylsulfanyl)-alpha-D-ribose 1-phosphate = 5-(methylsulfanyl)-D-ribulose 1-phosphate. The protein operates within amino-acid biosynthesis; L-methionine biosynthesis via salvage pathway; L-methionine from S-methyl-5-thio-alpha-D-ribose 1-phosphate: step 1/6. Catalyzes the interconversion of methylthioribose-1-phosphate (MTR-1-P) into methylthioribulose-1-phosphate (MTRu-1-P). The polypeptide is Methylthioribose-1-phosphate isomerase (Yersinia pseudotuberculosis serotype IB (strain PB1/+)).